A 420-amino-acid chain; its full sequence is 3-isopropylmalate dehydratase large subunit (420 aa).

Residues Cys300, Cys360, and Cys363 each coordinate [4Fe-4S] cluster.

This sequence belongs to the aconitase/IPM isomerase family. LeuC type 2 subfamily. Heterodimer of LeuC and LeuD. It depends on [4Fe-4S] cluster as a cofactor.

It catalyses the reaction (2R,3S)-3-isopropylmalate = (2S)-2-isopropylmalate. The protein operates within amino-acid biosynthesis; L-leucine biosynthesis; L-leucine from 3-methyl-2-oxobutanoate: step 2/4. Functionally, catalyzes the isomerization between 2-isopropylmalate and 3-isopropylmalate, via the formation of 2-isopropylmaleate. The protein is 3-isopropylmalate dehydratase large subunit of Heliobacterium modesticaldum (strain ATCC 51547 / Ice1).